Here is a 212-residue protein sequence, read N- to C-terminus: ATP-dependent dethiobiotin synthetase BioD (212 aa).

10–15 (GVGKTF) contributes to the ATP binding site. Residue Thr-14 participates in Mg(2+) binding. Residue Lys-36 is part of the active site. Ser-40 contacts substrate. Residues Asp-45, 106-109 (EGAG), and 167-168 (NC) each bind ATP. Positions 45 and 106 each coordinate Mg(2+).

It belongs to the dethiobiotin synthetase family. As to quaternary structure, homodimer. The cofactor is Mg(2+).

It is found in the cytoplasm. It carries out the reaction (7R,8S)-7,8-diammoniononanoate + CO2 + ATP = (4R,5S)-dethiobiotin + ADP + phosphate + 3 H(+). The protein operates within cofactor biosynthesis; biotin biosynthesis; biotin from 7,8-diaminononanoate: step 1/2. Functionally, catalyzes a mechanistically unusual reaction, the ATP-dependent insertion of CO2 between the N7 and N8 nitrogen atoms of 7,8-diaminopelargonic acid (DAPA, also called 7,8-diammoniononanoate) to form a ureido ring. This chain is ATP-dependent dethiobiotin synthetase BioD, found in Methanococcus aeolicus (strain ATCC BAA-1280 / DSM 17508 / OCM 812 / Nankai-3).